Reading from the N-terminus, the 88-residue chain is Sec-independent protein translocase protein TatA (88 aa).

A helical membrane pass occupies residues 3–23 (IFGVGLPEVTVILILALLIFG). Residues 56-66 (MKEEDKDESPK) show a composition bias toward basic and acidic residues. The disordered stretch occupies residues 56-88 (MKEEDKDESPKSIESNQSNEINQEKIDSENSNN). A compositionally biased stretch (polar residues) spans 67-76 (SIESNQSNEI). Residues 77–88 (NQEKIDSENSNN) show a composition bias toward basic and acidic residues.

This sequence belongs to the TatA/E family. In terms of assembly, forms a complex with TatC.

It is found in the cell inner membrane. Functionally, part of the twin-arginine translocation (Tat) system that transports large folded proteins containing a characteristic twin-arginine motif in their signal peptide across membranes. TatA could form the protein-conducting channel of the Tat system. The protein is Sec-independent protein translocase protein TatA of Prochlorococcus marinus (strain MIT 9301).